The primary structure comprises 326 residues: Probable cell division protein WhiA (326 aa).

The H-T-H motif DNA-binding region spans 275 to 308 (SLDELGRLADPPMTKDAIAGRIRRLLAMADKRAS).

It belongs to the WhiA family.

Functionally, involved in cell division and chromosome segregation. The sequence is that of Probable cell division protein WhiA from Renibacterium salmoninarum (strain ATCC 33209 / DSM 20767 / JCM 11484 / NBRC 15589 / NCIMB 2235).